The sequence spans 263 residues: MVEFVNDPNFKDLVVDTTIDNRNDEEPMTIRNFTELMIQFYKLGWMRGSGGAMGCISGSELMISPSALQKERIREQDVFVYNMKDKTEVQRPPNKRITVSSCSVLFSLIMKETGSECVIHTHSKCANLITQLIKSNVFEISHQEYIKGIYDPFSGKALKYSDTLTIPIIDNMPSESQLLEPIRGVLENYPQAIAVLVRNHGLFVWGPTWESTKIMTECIDYLLELSIEMLKNNIPLVNEEAFEKEDNLSDKMRTLMFGDMAPV.

C102 serves as a coordination point for substrate. 2 residues coordinate Zn(2+): H120 and H122. Residue E144 is the Proton donor/acceptor of the active site. A Zn(2+)-binding site is contributed by H200.

Belongs to the aldolase class II family. MtnB subfamily. Requires Zn(2+) as cofactor.

Its subcellular location is the cytoplasm. The catalysed reaction is 5-(methylsulfanyl)-D-ribulose 1-phosphate = 5-methylsulfanyl-2,3-dioxopentyl phosphate + H2O. The protein operates within amino-acid biosynthesis; L-methionine biosynthesis via salvage pathway; L-methionine from S-methyl-5-thio-alpha-D-ribose 1-phosphate: step 2/6. In terms of biological role, catalyzes the dehydration of methylthioribulose-1-phosphate (MTRu-1-P) into 2,3-diketo-5-methylthiopentyl-1-phosphate (DK-MTP-1-P). In Caenorhabditis elegans, this protein is Probable methylthioribulose-1-phosphate dehydratase.